Consider the following 298-residue polypeptide: MATH domain and coiled-coil domain-containing protein At3g58280 (298 aa).

The MATH domain occupies 9–128; that stretch reads KKTFGWVIKD…NGEITIIAEV (120 aa). Residues 240-288 adopt a coiled-coil conformation; it reads NLDWLRQKFDQALEKQIAYDTRIGELEKQVKKRKLAVTELEADLEKEKA.

The polypeptide is MATH domain and coiled-coil domain-containing protein At3g58280 (Arabidopsis thaliana (Mouse-ear cress)).